Reading from the N-terminus, the 251-residue chain is Vacuolar protein sorting-associated protein 37D (251 aa).

A VPS37 C-terminal domain is found at A93 to A182. The interval R174–R251 is disordered. The span at P221–R251 shows a compositional bias: pro residues.

Belongs to the VPS37 family. As to quaternary structure, component of the ESCRT-I complex (endosomal sorting complex required for transport I) which consists of TSG101, VPS28, a VPS37 protein (VPS37A to -D) and MVB12A or MVB12B in a 1:1:1:1 stoichiometry. Interacts with TSG101 and MVB12A. Component of the ESCRT-I complex (endosomal sorting complex required for transport I) which consists of TSG101, VPS28, a VPS37 protein (VPS37A to -D) and UBAP1 in a 1:1:1:1 stoichiometry.

The protein resides in the late endosome membrane. Functionally, component of the ESCRT-I complex, a regulator of vesicular trafficking process. Required for the sorting of endocytic ubiquitinated cargos into multivesicular bodies. May be involved in cell growth and differentiation. This Homo sapiens (Human) protein is Vacuolar protein sorting-associated protein 37D.